A 57-amino-acid polypeptide reads, in one-letter code: DNA-directed RNA polymerase subunit Rpo6 (57 aa).

The protein belongs to the archaeal Rpo6/eukaryotic RPB6 RNA polymerase subunit family. As to quaternary structure, part of the RNA polymerase complex.

The protein localises to the cytoplasm. It carries out the reaction RNA(n) + a ribonucleoside 5'-triphosphate = RNA(n+1) + diphosphate. In terms of biological role, DNA-dependent RNA polymerase (RNAP) catalyzes the transcription of DNA into RNA using the four ribonucleoside triphosphates as substrates. The protein is DNA-directed RNA polymerase subunit Rpo6 of Thermococcus onnurineus (strain NA1).